The chain runs to 298 residues: ATP-dependent Clp protease proteolytic subunit 5, chloroplastic (298 aa).

The transit peptide at 1–100 directs the protein to the chloroplast; sequence MAHACVSTSA…SSPYFPAYAQ (100 aa). The residue at position 101 (glycine 101) is an N-acetylglycine. Catalysis depends on serine 193, which acts as the Nucleophile. Residue histidine 218 is part of the active site.

It belongs to the peptidase S14 family. In terms of assembly, component of the chloroplastic Clp protease core complex which consist of at least 16 proteins: CLPP4 (3 copies), CLPP5 (3 copies), CLPR4 (2 copies), ClpP1 (1 copy), CLPP6 (1 copy), CLPR2 (1 copy), CLPT1 (1 copy), CLPT2 (1 copy) and 3 copies of CLPP3 and/or CLPR1 and/or CLPR3. The core complex is organized in two heptameric rings, one containing CLPP3,4,5,6 in a 1:2:3:1 ratio and the other CLPP1 and CLPR1,2,3,4 in a 3:1:1:1:1 ratio. Interacts with CHIP. In terms of processing, ubiquitinated in vitro by CHIP. In terms of tissue distribution, mostly expressed in leaves. Also detected in stems, and to a lower extent, in roots (at protein level).

It localises to the plastid. Its subcellular location is the chloroplast stroma. It catalyses the reaction Hydrolysis of proteins to small peptides in the presence of ATP and magnesium. alpha-casein is the usual test substrate. In the absence of ATP, only oligopeptides shorter than five residues are hydrolyzed (such as succinyl-Leu-Tyr-|-NHMec, and Leu-Tyr-Leu-|-Tyr-Trp, in which cleavage of the -Tyr-|-Leu- and -Tyr-|-Trp bonds also occurs).. Functionally, cleaves peptides in various proteins in a process that requires ATP hydrolysis. Has a chymotrypsin-like activity. Plays a major role in the degradation of misfolded proteins. The sequence is that of ATP-dependent Clp protease proteolytic subunit 5, chloroplastic from Arabidopsis thaliana (Mouse-ear cress).